Here is a 394-residue protein sequence, read N- to C-terminus: RILP-like protein 1 (394 aa).

Residues 2-89 (EGISALEKNV…RLERMDRIEK (88 aa)) form the RH1 domain. Residues 68 to 327 (EMEELRLELD…EAEEENKLPQ (260 aa)) adopt a coiled-coil conformation. Positions 282–347 (RPRFTLQELR…IPQESGIKRL (66 aa)) constitute an RH2 domain.

The protein belongs to the RILPL family.

It is found in the cytoplasm. Its subcellular location is the cytosol. The protein localises to the cytoskeleton. The protein resides in the microtubule organizing center. It localises to the centrosome. It is found in the cell projection. Its subcellular location is the cilium. Plays a role in the regulation of cell shape and polarity. Plays a role in cellular protein transport, including protein transport away from primary cilia. Neuroprotective protein. The chain is RILP-like protein 1 (rilpl1) from Xenopus laevis (African clawed frog).